Consider the following 210-residue polypeptide: 3-demethoxyubiquinol 3-hydroxylase (210 aa).

Residues Glu-59, Glu-89, His-92, Glu-141, Glu-173, and His-176 each coordinate Fe cation.

The protein belongs to the COQ7 family. Requires Fe cation as cofactor.

Its subcellular location is the cell membrane. The enzyme catalyses a 5-methoxy-2-methyl-3-(all-trans-polyprenyl)benzene-1,4-diol + AH2 + O2 = a 3-demethylubiquinol + A + H2O. The protein operates within cofactor biosynthesis; ubiquinone biosynthesis. In terms of biological role, catalyzes the hydroxylation of 2-nonaprenyl-3-methyl-6-methoxy-1,4-benzoquinol during ubiquinone biosynthesis. The polypeptide is 3-demethoxyubiquinol 3-hydroxylase (Albidiferax ferrireducens (strain ATCC BAA-621 / DSM 15236 / T118) (Rhodoferax ferrireducens)).